Reading from the N-terminus, the 195-residue chain is Ephrin-A2 (195 aa).

An N-terminal signal peptide occupies residues 1–16 (MELSLVVFTVVCWVSV). The Ephrin RBD domain occupies 24 to 157 (SDRHAVYWNS…KLKVYVKPTS (134 aa)). The N-linked (GlcNAc...) asparagine glycan is linked to Asn32. Disulfide bonds link Cys57/Cys97 and Cys85/Cys146. The GPI-anchor amidated cysteine moiety is linked to residue Cys174. A propeptide spans 175-195 (GADGPCLAVLMLLLVFLLAGV) (removed in mature form).

The protein belongs to the ephrin family. Binds to the receptor tyrosine kinases epha2, epha3, epha4 and epha5. Interacts with epha8; activates epha8. In terms of tissue distribution, widespread expression in the embryo.

Its subcellular location is the cell membrane. Functionally, cell surface GPI-bound ligand for Eph receptors, a family of receptor tyrosine kinases which are crucial for migration, repulsion and adhesion during neuronal, vascular and epithelial development. Binds promiscuously Eph receptors residing on adjacent cells, leading to contact-dependent bidirectional signaling into neighboring cells. The signaling pathway downstream of the receptor is referred to as forward signaling while the signaling pathway downstream of the ephrin ligand is referred to as reverse signaling. With the epha2 receptor may play a role in bone remodeling through regulation of osteoclastogenesis and osteoblastogenesis. In Danio rerio (Zebrafish), this protein is Ephrin-A2 (efna2).